The following is a 229-amino-acid chain: MKKITIAIDGFSSCGKSTMAKDLAKEIGYIYIDSGAMYRAVTLYSIENGIFHGDTIDTDELKRRIGDIHISFRIDPETGRPNTYLNGVNVENKIRTMEVSSKVSPISALGFVREAMVAQQQEMGKAKGIVMDGRDIGTTVFPDAELKIFVTASAEIRAQRRYDELKAKGQETGFEEILENVKQRDHIDQTREVSPLKKADDALLLDNSHLTIAEQKEWLMAEYQKAIKA.

An ATP-binding site is contributed by Gly-10–Thr-18.

Belongs to the cytidylate kinase family. Type 1 subfamily.

It is found in the cytoplasm. It carries out the reaction CMP + ATP = CDP + ADP. The enzyme catalyses dCMP + ATP = dCDP + ADP. In Bacteroides fragilis (strain ATCC 25285 / DSM 2151 / CCUG 4856 / JCM 11019 / LMG 10263 / NCTC 9343 / Onslow / VPI 2553 / EN-2), this protein is Cytidylate kinase.